Reading from the N-terminus, the 375-residue chain is Superinfection exclusion protein (375 aa).

The signal sequence occupies residues 1-15 (MIALLILSLACSVSA).

The protein belongs to the serpin family. Orthopoxvirus OPG040 subfamily. As to quaternary structure, interacts with OPG185/A56 protein.

It is found in the virion membrane. The protein localises to the host cell membrane. Negatively regulates superinfection and syncytium formation in infected host cells. Acts in concert with OPG185/A56 protein at the host cell membrane by interacting with and inhibiting the mature virion entry/fusion complex (EFC). This mechanism ensures that new virions released from the cell cannot enter already infected cells. This chain is Superinfection exclusion protein (OPG040), found in Cynomys gunnisoni (Gunnison's prairie dog).